Consider the following 697-residue polypeptide: U-box domain-containing protein 18 (697 aa).

Residues 23 to 210 (SISIVTLLDS…INRILDHVGI (188 aa)) are U-box N-terminal domain (UND) required for EXO70B1 binding and crucial for the negative regulation of ABA-dependent stomatal movement. Positions 287-361 (LKVEDLLCPI…RKHCKTNGIV (75 aa)) constitute a U-box domain. ARM repeat units lie at residues 420–459 (SFNRSCLVKAGAVTPLLKLLSSVDIRIQENAMAGILNLSK), 461–500 (VTGKSKIAGEGLKILVEILNEGAKTETRLYSASALFYLSS), 502–544 (EDYS…GLLM), 546–587 (SDNH…KLAE), 589–631 (PDGT…NLCL), and 657–696 (NGEYGGSKKASALIRMIHEFQERKTGSVEPNLQRGRFVHA).

As to quaternary structure, interacts with EXO70B1 via its U-box N-terminal domain (UND).

The protein localises to the endomembrane system. It carries out the reaction S-ubiquitinyl-[E2 ubiquitin-conjugating enzyme]-L-cysteine + [acceptor protein]-L-lysine = [E2 ubiquitin-conjugating enzyme]-L-cysteine + N(6)-ubiquitinyl-[acceptor protein]-L-lysine.. The protein operates within protein modification; protein ubiquitination. Functionally, functions as an E3 ubiquitin ligase. Mediates EXO70B1 ubiquitination. Involved in the regulation of abscisic acid (ABA)-mediated stomatal movements. The protein is U-box domain-containing protein 18 of Arabidopsis thaliana (Mouse-ear cress).